We begin with the raw amino-acid sequence, 835 residues long: MPWCNTRLRTCGASPKIFLRRVRCPVLLHNWTIGRVSSVSKMILRFLRSYSKRVDITRVRNIGIIAHIDAGKTTTTERMLYYSGKIKRIGDVDHGDTITDFLPQERSRGITIQSAAISFNWRDNYTVNLIDTPGHADFTFEVIRSLRVLDGCVTILDAVAGVEAQTEKVWKQAAEIPKVCFINKMDRVGAGYSRAVKELIVKLKTRVLLLNTPLFAARDSSADPVFVGVLDAVNGQLLEWDPEDPDKISAKAVDKECAHYEELVSAREALVETLSEVDEKLVEYFLGEADGDYMKVPVEVLNESIRRATLSQYAVPVLCGASFKNIGVQPLLDAVVDYLPSPAEARLPELSNKDLPVQHHLKNGLLVNKNANLCLALAFKVTTDPIRGAMVFIRVYSGVLNSGHTVYNSSTGVKFKLGKLIKMHANVAEDIKSLHPGDIGVLAGANVADHVRTGDTIVAHCTSKDGIRSFKKAELALRIHPIDIPPPVFSAAVEPRTLGNKKAMDESLTQLTREDPSLVIVRDEETGQTVMNGMGELHLEIAADRLLNEFKAPVRVGKVAVSYKETINTATETKHSETDDGYSFELEVRQYNEEDKVLFSNGWYPLGSDNNYLVIDPNPRFNEDNWPFPLKYEAFVNSIISCCIVALQRGGKTAGFPLHSCVIHVKRWRLPLDCAAAASILLTVRPLIISALTSLPTSAFSILEPIMNVEVTVQQQDLGSVVQDLTGARKANILSIDDEHHWADAAVTDKDVHLFHDIAEKQYLPPDSTVFQAKLNKEGQTGKIVKAHVPLKEMVSYMNKLRMLTKGRGSFHMSYLGMERASSDRVDGILEDADL.

A mitochondrion-targeting transit peptide spans 1-50 (MPWCNTRLRTCGASPKIFLRRVRCPVLLHNWTIGRVSSVSKMILRFLRSY). The 287-residue stretch at 57 to 343 (TRVRNIGIIA…AVVDYLPSPA (287 aa)) folds into the tr-type G domain. GTP contacts are provided by residues 66–73 (AHIDAGKT), 131–135 (DTPGH), and 183–186 (NKMD).

Belongs to the TRAFAC class translation factor GTPase superfamily. Classic translation factor GTPase family. EF-G/EF-2 subfamily.

It is found in the mitochondrion. In terms of biological role, mitochondrial GTPase that mediates the disassembly of ribosomes from messenger RNA at the termination of mitochondrial protein biosynthesis. Not involved in the GTP-dependent ribosomal translocation step during translation elongation. This Eremothecium gossypii (strain ATCC 10895 / CBS 109.51 / FGSC 9923 / NRRL Y-1056) (Yeast) protein is Ribosome-releasing factor 2, mitochondrial.